The chain runs to 235 residues: uncharacterized protein (235 aa).

The next 2 membrane-spanning stretches (helical) occupy residues 167 to 187 (AFKLAILVTPFVETLSWLNEL) and 190 to 210 (LFAYCPAELSLSLFFLCLLLW).

It is found in the membrane. This is an uncharacterized protein from Saccharomyces cerevisiae (strain ATCC 204508 / S288c) (Baker's yeast).